A 252-amino-acid polypeptide reads, in one-letter code: Hydroxyacylglutathione hydrolase (252 aa).

7 residues coordinate Zn(2+): His54, His56, Asp58, His59, His113, Asp132, and His170.

Belongs to the metallo-beta-lactamase superfamily. Glyoxalase II family. As to quaternary structure, monomer. The cofactor is Zn(2+).

It catalyses the reaction an S-(2-hydroxyacyl)glutathione + H2O = a 2-hydroxy carboxylate + glutathione + H(+). The protein operates within secondary metabolite metabolism; methylglyoxal degradation; (R)-lactate from methylglyoxal: step 2/2. In terms of biological role, thiolesterase that catalyzes the hydrolysis of S-D-lactoyl-glutathione to form glutathione and D-lactic acid. The protein is Hydroxyacylglutathione hydrolase of Thermosynechococcus vestitus (strain NIES-2133 / IAM M-273 / BP-1).